The primary structure comprises 491 residues: MTQAKDVALIFELSKQGRVGHSLPNLDIEEQPLESLLPEAYVREEEPELPEVSELQIMRHYTALSKRNHGVDSGFYPLGSCTMKYNPKINEDIARLPGLVHVHPYQPEEQVQGSLKMLYSLQTALAEITGMDEVTLQPAAGAHGEWTGLMMIRAYHEANGDKKRTKVVVPDSAHGTNPASATVAGFESVTVRTNEAGLVDLDHLREVVNEETAALMLTNPNTLGLFEADIQEMADIIHRAGGKLYYDGANSNAILGIARPGDMGFDVVHLNLHKTFTGPHGGGGPGSGPVGVKKELVPFLPKPVLVNDDGFFRFDSDRPQSIGRVKPYYGNYGINLRAYTYIRTMGPDGLRQVSENAVLNANYMMRRLESYYDLPYAQHCKHEFVLSGKRQKKLGVRTLDIAKRLLDFGYHPPTIYFPLNVEECMMIEPTETESKETLDEFIEAMIQIAKEAEESPELVQEAPHHTVIKRLDETLAARKPILRYEMKKETV.

Position 274 is an N6-(pyridoxal phosphate)lysine (lysine 274).

It belongs to the GcvP family. C-terminal subunit subfamily. The glycine cleavage system is composed of four proteins: P, T, L and H. In this organism, the P 'protein' is a heterodimer of two subunits. Pyridoxal 5'-phosphate serves as cofactor.

The enzyme catalyses N(6)-[(R)-lipoyl]-L-lysyl-[glycine-cleavage complex H protein] + glycine + H(+) = N(6)-[(R)-S(8)-aminomethyldihydrolipoyl]-L-lysyl-[glycine-cleavage complex H protein] + CO2. Its function is as follows. The glycine cleavage system catalyzes the degradation of glycine. The P protein binds the alpha-amino group of glycine through its pyridoxal phosphate cofactor; CO(2) is released and the remaining methylamine moiety is then transferred to the lipoamide cofactor of the H protein. The protein is Probable glycine dehydrogenase (decarboxylating) subunit 2 of Shouchella clausii (strain KSM-K16) (Alkalihalobacillus clausii).